The following is a 338-amino-acid chain: GTPase Obg (338 aa).

In terms of domain architecture, Obg spans 1-159; that stretch reads MSFIDEVKIH…RWLRLELKLM (159 aa). Residues 160–331 form the OBG-type G domain; that stretch reads ADVGLLGMPS…LLDEIARNLW (172 aa). Residues 166–173, 191–195, 213–216, 283–286, and 312–314 each bind GTP; these read GMPSVGKS, FTTLK, DIPG, NKID, and SAA. Residues Ser173 and Thr193 each coordinate Mg(2+).

This sequence belongs to the TRAFAC class OBG-HflX-like GTPase superfamily. OBG GTPase family. Monomer. It depends on Mg(2+) as a cofactor.

It is found in the cytoplasm. In terms of biological role, an essential GTPase which binds GTP, GDP and possibly (p)ppGpp with moderate affinity, with high nucleotide exchange rates and a fairly low GTP hydrolysis rate. Plays a role in control of the cell cycle, stress response, ribosome biogenesis and in those bacteria that undergo differentiation, in morphogenesis control. The polypeptide is GTPase Obg (Geotalea uraniireducens (strain Rf4) (Geobacter uraniireducens)).